Here is a 379-residue protein sequence, read N- to C-terminus: Dual-specificity RNA methyltransferase RlmN (379 aa).

The Proton acceptor role is filled by glutamate 90. One can recognise a Radical SAM core domain in the interval 96 to 348; sequence EPSRGTLCVS…TTVRKTRGDD (253 aa). Cysteine 103 and cysteine 353 are joined by a disulfide. [4Fe-4S] cluster contacts are provided by cysteine 110, cysteine 114, and cysteine 117. S-adenosyl-L-methionine contacts are provided by residues 179–180, serine 211, 233–235, and asparagine 310; these read GE and SLH. The active-site S-methylcysteine intermediate is cysteine 353.

It belongs to the radical SAM superfamily. RlmN family. [4Fe-4S] cluster serves as cofactor.

The protein resides in the cytoplasm. The catalysed reaction is adenosine(2503) in 23S rRNA + 2 reduced [2Fe-2S]-[ferredoxin] + 2 S-adenosyl-L-methionine = 2-methyladenosine(2503) in 23S rRNA + 5'-deoxyadenosine + L-methionine + 2 oxidized [2Fe-2S]-[ferredoxin] + S-adenosyl-L-homocysteine. The enzyme catalyses adenosine(37) in tRNA + 2 reduced [2Fe-2S]-[ferredoxin] + 2 S-adenosyl-L-methionine = 2-methyladenosine(37) in tRNA + 5'-deoxyadenosine + L-methionine + 2 oxidized [2Fe-2S]-[ferredoxin] + S-adenosyl-L-homocysteine. Specifically methylates position 2 of adenine 2503 in 23S rRNA and position 2 of adenine 37 in tRNAs. m2A2503 modification seems to play a crucial role in the proofreading step occurring at the peptidyl transferase center and thus would serve to optimize ribosomal fidelity. This is Dual-specificity RNA methyltransferase RlmN from Nitrosomonas europaea (strain ATCC 19718 / CIP 103999 / KCTC 2705 / NBRC 14298).